A 32-amino-acid polypeptide reads, in one-letter code: Secreted proteinase (32 aa).

The interval 1-32 (DTANDPKYGSQYAPQKVNADVDQGVXXXHPEL) is disordered. Asp-22 functions as the Charge relay system in the catalytic mechanism.

Belongs to the peptidase S8 family.

It is found in the secreted. This chain is Secreted proteinase, found in Haloferax mediterranei (Halobacterium mediterranei).